Consider the following 318-residue polypeptide: Methionine import ATP-binding protein MetN (318 aa).

The ABC transporter domain occupies 2-237 (IEIKDVGKIF…PEGELKKIIE (236 aa)). 34–41 (GRSGAGKS) contributes to the ATP binding site.

This sequence belongs to the ABC transporter superfamily. Methionine importer (TC 3.A.1.24) family. As to quaternary structure, the complex is composed of two ATP-binding proteins (MetN), two transmembrane proteins (MetI) and a solute-binding protein (MetQ).

The protein resides in the cell membrane. The catalysed reaction is L-methionine(out) + ATP + H2O = L-methionine(in) + ADP + phosphate + H(+). The enzyme catalyses D-methionine(out) + ATP + H2O = D-methionine(in) + ADP + phosphate + H(+). In terms of biological role, part of the ABC transporter complex MetNIQ involved in methionine import. Responsible for energy coupling to the transport system. The polypeptide is Methionine import ATP-binding protein MetN (Clostridium tetani (strain Massachusetts / E88)).